Consider the following 115-residue polypeptide: uncharacterized protein (115 aa).

Belongs to the transposase 34 family.

This is an uncharacterized protein from Sinorhizobium fredii (strain NBRC 101917 / NGR234).